A 473-amino-acid polypeptide reads, in one-letter code: MKHTIIENEPEIKLQNDLNHHIEISPNTKTTNGTTTTTTTLNVNKTLKAIDLIETSIKNHISTIDHENCLPNDEDSFFVCDLGEIINSVNQWQQILPMVQPYYAVKCNSNPQILTTLSELGVNFDCASKNEIDLVLSLGIHQAHERIIYANPCKTNSFIRHAADENVNLTTVDNVHELYKLAKFHPHCKILIRLITDDSTAQCQLSTKFGCDLNTAIGEILPKAKELGLQVHGVAFHVGSGAKDFSSIYQAIKDSRILFDEMLSMGFTPKLLDIGGGFERETFPQSSQMVKFALEKFFPIEFSQLNEIKFIAEPGRFMVANAFTLITHIIARRDLPTGGNNNNNDMTPSAMLYINDGVYGNLNCILFDHQTPKVYVLTNENQLFYKQEMMRSLSVNNNNNNNNKTDGFKFSIWGPTCDGLDCVSSLAKLSKNVQVGDWLFFENVGAYTSCASTKFNGLSSGETKTLYVNSNEE.

Lys106 is subject to N6-(pyridoxal phosphate)lysine. Residues Ser240, Gly277, and 313 to 316 (EPGR) each bind pyridoxal 5'-phosphate. 367–368 (FD) lines the substrate pocket. The active-site Proton donor; shared with dimeric partner is the Cys417. Position 418 (Asp418) interacts with substrate. Tyr447 provides a ligand contact to pyridoxal 5'-phosphate.

This sequence belongs to the Orn/Lys/Arg decarboxylase class-II family. As to quaternary structure, homodimer. Only the dimer is catalytically active, as the active sites are constructed of residues from both monomers. Pyridoxal 5'-phosphate serves as cofactor.

The protein localises to the cytoplasm. It catalyses the reaction L-ornithine + H(+) = putrescine + CO2. Its pathway is amine and polyamine biosynthesis; putrescine biosynthesis via L-ornithine pathway; putrescine from L-ornithine: step 1/1. Inhibited by antizyme (AZ) OAZ1 in response to polyamine levels. AZ inhibits the assembly of the functional homodimer by binding to ODC monomers and targeting them for ubiquitin-independent proteolytic destruction by the 26S proteasome. Its function is as follows. Catalyzes the first and rate-limiting step of polyamine biosynthesis that converts ornithine into putrescine, which is the precursor for the polyamines, spermidine and spermine. Polyamines are essential for cell proliferation and are implicated in cellular processes, ranging from DNA replication to apoptosis. The sequence is that of Ornithine decarboxylase (SPE1) from Candida albicans (strain SC5314 / ATCC MYA-2876) (Yeast).